Reading from the N-terminus, the 440-residue chain is Cysteine proteinase (440 aa).

The signal sequence occupies residues 1–60; that stretch reads MYSSSVVSNPNERLVNNRVENDLESSDDTLSTQAKPVSRLLTRKLLLGVVVLFFLAGVSV. Positions 61–229 are cleaved as a propeptide — activation peptide; that stretch reads VSYFLFSKYK…DEDVDLAKLT (169 aa). The segment at 166-182 is involved in processing to yield active enzymes; the sequence is VKGINRFSDLTEREFYK. The N-linked (GlcNAc...) asparagine glycan is linked to N206. C250 and C291 are disulfide-bonded. Residues C253, H382, and N404 contribute to the active site.

Belongs to the peptidase C1 family.

The polypeptide is Cysteine proteinase (Theileria parva (East coast fever infection agent)).